A 483-amino-acid polypeptide reads, in one-letter code: Coagulation factor X isoform 1 (483 aa).

An N-terminal signal peptide occupies residues 1-20; that stretch reads MAPQLLLCLILTFLWSLPEA. The propeptide occupies 21-40; the sequence is ESNVFLKSKVANRFLQRTKR. The Gla domain occupies 41 to 86; it reads ANSLFEEFKSGNIERECIEERCSKEEAREAFEDDEKTETFWNVYVD. 4-carboxyglutamate is present on residues Glu-46, Glu-47, Glu-54, Glu-56, Glu-59, Glu-60, Glu-65, Glu-66, Glu-69, Glu-72, and Glu-75. Cys-57 and Cys-62 are joined by a disulfide. The EGF-like 1; calcium-binding domain occupies 86 to 122; the sequence is DGDQCSSNPCHYGGTCKDGIGSYTCTCLSGYEGKNCE. 11 cysteine pairs are disulfide-bonded: Cys-90/Cys-101, Cys-95/Cys-110, Cys-112/Cys-121, Cys-129/Cys-140, Cys-136/Cys-149, Cys-151/Cys-164, Cys-172/Cys-345, Cys-245/Cys-250, Cys-265/Cys-281, Cys-393/Cys-407, and Cys-418/Cys-446. An O-linked (Hex...) serine glycan is attached at Ser-92. At Asp-103 the chain carries (3R)-3-hydroxyaspartate. The EGF-like 2 domain maps to 125 to 165; sequence LYKSCRVDNGDCWHFCKPVQNGIQCSCAESYLLGEDGHSCV. A propeptide spans 183-238 (activation peptide); that stretch reads EANLPDFQTDFSDDYDEIDENNFVETPTNFSGLVLTVQSQNATLLKKSDNPSPDIR. The Peptidase S1 domain maps to 239-470; the sequence is VVNGTDCKLG…FILWIKRIIR (232 aa). His-280 serves as the catalytic Charge relay system. Asn-283 carries an N-linked (GlcNAc...) asparagine glycan. The Charge relay system role is filled by Asp-325. The active-site Charge relay system is Ser-422.

Belongs to the peptidase S1 family. As to quaternary structure, heterodimer of a light chain and a heavy chain; disulfide-linked. Post-translationally, gamma-carboxyglutamate residues are formed by vitamin K dependent carboxylation. These residues are essential for the binding of calcium. The activation peptide is cleaved by factor IXa (in the intrinsic pathway), or by factor VIIa (in the extrinsic pathway). In terms of processing, the iron and 2-oxoglutarate dependent 3-hydroxylation of aspartate and asparagine is (R) stereospecific within EGF domains. Plasma; synthesized in the liver.

It localises to the secreted. It carries out the reaction Selective cleavage of Arg-|-Thr and then Arg-|-Ile bonds in prothrombin to form thrombin.. Its function is as follows. Factor Xa is a vitamin K-dependent glycoprotein that converts prothrombin to thrombin in the presence of factor Va, calcium and phospholipid during blood clotting. The chain is Coagulation factor X isoform 1 (F10) from Pseudonaja textilis (Eastern brown snake).